Consider the following 424-residue polypeptide: Serine--tRNA ligase (424 aa).

230–232 (TAE) contributes to the L-serine binding site. Residue 261 to 263 (RSE) participates in ATP binding. Glutamate 284 contacts L-serine. 348–351 (EISS) is an ATP binding site. Serine 384 is a binding site for L-serine.

It belongs to the class-II aminoacyl-tRNA synthetase family. Type-1 seryl-tRNA synthetase subfamily. In terms of assembly, homodimer. The tRNA molecule binds across the dimer.

The protein localises to the cytoplasm. It carries out the reaction tRNA(Ser) + L-serine + ATP = L-seryl-tRNA(Ser) + AMP + diphosphate + H(+). It catalyses the reaction tRNA(Sec) + L-serine + ATP = L-seryl-tRNA(Sec) + AMP + diphosphate + H(+). It participates in aminoacyl-tRNA biosynthesis; selenocysteinyl-tRNA(Sec) biosynthesis; L-seryl-tRNA(Sec) from L-serine and tRNA(Sec): step 1/1. Its function is as follows. Catalyzes the attachment of serine to tRNA(Ser). Is also able to aminoacylate tRNA(Sec) with serine, to form the misacylated tRNA L-seryl-tRNA(Sec), which will be further converted into selenocysteinyl-tRNA(Sec). The polypeptide is Serine--tRNA ligase (Nitratidesulfovibrio vulgaris (strain ATCC 29579 / DSM 644 / CCUG 34227 / NCIMB 8303 / VKM B-1760 / Hildenborough) (Desulfovibrio vulgaris)).